Here is a 331-residue protein sequence, read N- to C-terminus: PIN2/TERF1-interacting telomerase inhibitor 1 (331 aa).

Disordered regions lie at residues 1-28 (MSMLAERRRKQKWAVDPRNTAWSNDDSK), 156-175 (AQDGCSNSTADEADTSLTTT), and 197-331 (SKSQ…KVSR). A G-patch domain is found at 26 to 72 (DSKFGQKMLEKMGWSKGKGLGAQEQGATEHIKVKVKNNHLGLGATNN). Residue Ser-233 is modified to Phosphoserine. Positions 236 to 246 (HKAKRHKKKKR) are enriched in basic residues. Positions 247–261 (VEAERGPAAKKRDQV) are enriched in basic and acidic residues. The telomerase inhibitory domain (TID) stretch occupies residues 254 to 328 (AAKKRDQVEL…DSAPVKKKKK (75 aa)). Phosphoserine occurs at positions 269, 274, and 277. Positions 291 to 301 (QDDVPKPRKRR) match the TBM motif. The segment covering 297 to 306 (PRKRRAKKTL) has biased composition (basic residues).

The protein belongs to the PINX1 family. Interacts with MCRS1, TERT, TERF1, NCL/nucleolin, and the telomerase RNA.

The protein localises to the nucleus. It is found in the nucleolus. Its subcellular location is the chromosome. It localises to the telomere. The protein resides in the centromere. The protein localises to the kinetochore. Functionally, microtubule-binding protein essential for faithful chromosome segregation. Mediates TRF1 and TERT accumulation in nucleolus and enhances TRF1 binding to telomeres. Inhibits telomerase activity. May inhibit cell proliferation and act as tumor suppressor. The protein is PIN2/TERF1-interacting telomerase inhibitor 1 of Rattus norvegicus (Rat).